Reading from the N-terminus, the 207-residue chain is A-type ATP synthase subunit E (207 aa).

It belongs to the V-ATPase E subunit family. As to quaternary structure, has multiple subunits with at least A(3), B(3), C, D, E, F, H, I and proteolipid K(x).

It is found in the cell membrane. In terms of biological role, component of the A-type ATP synthase that produces ATP from ADP in the presence of a proton gradient across the membrane. This Hyperthermus butylicus (strain DSM 5456 / JCM 9403 / PLM1-5) protein is A-type ATP synthase subunit E.